Consider the following 432-residue polypeptide: MSELLVTGGQVLRPDLTVERADVLVSQDSGDIVAVDDPGTLDGDDELDASDGLVIPGLVNAHTHVAMTLLRGLADDKPLDAWLQEDVWPVEAELTADDIRAGAELGLVEMIRSGTTALSDMYFEVEEIADAVDQAGMRAVLGFTAVTVGKDDEAARSDLEESLDVARKLDGAADGRVRTTFQPHSLTTVGEEYLREFVPQALEDDLSIHLHANETRDEVTPIVDEHGQRPLAYADNIGLLDGDTYVAHGVHVDDSEIDLLAETGTGVAHCPASNMKLASGMAPVQDLLDAGVTVGIGTDGAASNNDLDMFDEMRDAAMIGKLAADDASAVDAGTVVEMATANGAALLGFDSGRIETGANADLAVIDLDAPHLTPAHDLVSHLAYAVHGSDVRHTVCDGEVLMRDRTVEVFDEQAVRERASEHAASLVERAGD.

Zn(2+) contacts are provided by His62 and His64. Substrate contacts are provided by Glu91 and His184. Zn(2+) is bound at residue His211. 2 residues coordinate substrate: Glu214 and Asp299. Asp299 contributes to the Zn(2+) binding site.

Belongs to the metallo-dependent hydrolases superfamily. MTA/SAH deaminase family. Requires Zn(2+) as cofactor.

It catalyses the reaction S-adenosyl-L-homocysteine + H2O + H(+) = S-inosyl-L-homocysteine + NH4(+). It carries out the reaction S-methyl-5'-thioadenosine + H2O + H(+) = S-methyl-5'-thioinosine + NH4(+). Catalyzes the deamination of 5-methylthioadenosine and S-adenosyl-L-homocysteine into 5-methylthioinosine and S-inosyl-L-homocysteine, respectively. Is also able to deaminate adenosine. The polypeptide is 5-methylthioadenosine/S-adenosylhomocysteine deaminase (Haloarcula marismortui (strain ATCC 43049 / DSM 3752 / JCM 8966 / VKM B-1809) (Halobacterium marismortui)).